A 476-amino-acid chain; its full sequence is Ankyrin repeat, SAM and basic leucine zipper domain-containing protein 1 (476 aa).

Phosphoserine occurs at positions 18 and 21. 6 ANK repeats span residues 46 to 75 (EKNE…SIDS), 79 to 108 (YGWT…NASF), 111 to 145 (DKQT…DPNV), 149 to 178 (RLMT…EVNT), 182 to 211 (NGYT…DKML), and 215 to 244 (DGKT…PLEG). Positions 273-335 (SYAAFEDLEI…KILAALKELE (63 aa)) constitute an SAM domain.

As to quaternary structure, interacts with DDX4, PIWIL1, RANBP9 and TDRD1.

The protein localises to the cytoplasm. In terms of biological role, plays a central role during spermatogenesis by repressing transposable elements and preventing their mobilization, which is essential for the germline integrity. Acts via the piRNA metabolic process, which mediates the repression of transposable elements during meiosis by forming complexes composed of piRNAs and Piwi proteins and governs the methylation and subsequent repression of transposons. Its association with pi-bodies suggests a participation in the primary piRNAs metabolic process. Required prior to the pachytene stage to facilitate the production of multiple types of piRNAs, including those associated with repeats involved in the regulation of retrotransposons. May act by mediating protein-protein interactions during germ cell maturation. In Dasypus novemcinctus (Nine-banded armadillo), this protein is Ankyrin repeat, SAM and basic leucine zipper domain-containing protein 1 (ASZ1).